A 243-amino-acid chain; its full sequence is Probable transcriptional regulatory protein Smal_3128 (243 aa).

The protein belongs to the TACO1 family.

Its subcellular location is the cytoplasm. The protein is Probable transcriptional regulatory protein Smal_3128 of Stenotrophomonas maltophilia (strain R551-3).